We begin with the raw amino-acid sequence, 148 residues long: Probable DNA-directed RNA polymerases I, II, and III subunit RPABC3 (148 aa).

Residues 16-40 (DPDGKKFDRVSRYFCDAESFKMELI) are non-specific ssDNA binding.

Belongs to the eukaryotic RPB8 RNA polymerase subunit family. Component of the RNA polymerase I (Pol I), RNA polymerase II (Pol II) and RNA polymerase III (Pol III) complexes consisting of at least 13, 12 and 17 subunits, respectively. Directly interacts with POLR2A.

It is found in the nucleus. DNA-dependent RNA polymerase catalyzes the transcription of DNA into RNA using the four ribonucleoside triphosphates as substrates. Common component of RNA polymerases I, II and III which synthesize ribosomal RNA precursors, mRNA precursors and many functional non-coding RNAs, and small RNAs, such as 5S rRNA and tRNAs, respectively. This is Probable DNA-directed RNA polymerases I, II, and III subunit RPABC3 from Caenorhabditis briggsae.